The primary structure comprises 452 residues: Interferon-induced protein 44-like (452 aa).

Residues 1–159 form the TLDc domain; it reads MEVTTRLTWN…YLECEVFRVE (159 aa).

This sequence belongs to the IFI44 family. As to quaternary structure, interacts with FKBP5; this interaction modulates IKBKB and IKBKE kinase activities.

The protein resides in the cytoplasm. Functionally, type I interferon-stimulated gene (ISG) that plays a critical role in antiviral and antibacterial activity. During bacterial infection, promotes macrophage differentiation and facilitates inflammatory cytokine secretion. Plays a role in the control of respiratory syncytial virus/RSV infection, reducing the ability of the virus to replicate. Exhibits a low antiviral activity against hepatitis C virus. Also acts as a feedback regulator of IFN responses by negatively regulating IKBKB and IKBKE kinase activities through interaction with FKBP5. In Homo sapiens (Human), this protein is Interferon-induced protein 44-like (IFI44L).